Consider the following 98-residue polypeptide: NADH-ubiquinone oxidoreductase chain 4L (98 aa).

3 consecutive transmembrane segments (helical) span residues 1-21 (MSLIHINVFLAFTTSLMGLLM), 29-49 (SLLCLEGMMLSLFIMATMMVL), and 61-81 (IILLVFAACEAALGLSLLVMI).

The protein belongs to the complex I subunit 4L family. Core subunit of respiratory chain NADH dehydrogenase (Complex I) which is composed of 45 different subunits.

It localises to the mitochondrion inner membrane. The catalysed reaction is a ubiquinone + NADH + 5 H(+)(in) = a ubiquinol + NAD(+) + 4 H(+)(out). In terms of biological role, core subunit of the mitochondrial membrane respiratory chain NADH dehydrogenase (Complex I) which catalyzes electron transfer from NADH through the respiratory chain, using ubiquinone as an electron acceptor. Part of the enzyme membrane arm which is embedded in the lipid bilayer and involved in proton translocation. This is NADH-ubiquinone oxidoreductase chain 4L (MT-ND4L) from Ceratotherium simum (White rhinoceros).